We begin with the raw amino-acid sequence, 358 residues long: Methylthioribose-1-phosphate isomerase (358 aa).

Residues Arg-54–Ala-56, Arg-96, and Gln-205 contribute to the substrate site. The Proton donor role is filled by Asp-246. Ser-256–Lys-257 is a binding site for substrate.

This sequence belongs to the eIF-2B alpha/beta/delta subunits family. MtnA subfamily.

It carries out the reaction 5-(methylsulfanyl)-alpha-D-ribose 1-phosphate = 5-(methylsulfanyl)-D-ribulose 1-phosphate. Its pathway is amino-acid biosynthesis; L-methionine biosynthesis via salvage pathway; L-methionine from S-methyl-5-thio-alpha-D-ribose 1-phosphate: step 1/6. Catalyzes the interconversion of methylthioribose-1-phosphate (MTR-1-P) into methylthioribulose-1-phosphate (MTRu-1-P). The polypeptide is Methylthioribose-1-phosphate isomerase (Pseudomonas putida (strain GB-1)).